Here is a 100-residue protein sequence, read N- to C-terminus: Large ribosomal subunit protein uL23 (100 aa).

The protein belongs to the universal ribosomal protein uL23 family. As to quaternary structure, part of the 50S ribosomal subunit. Contacts protein L29, and trigger factor when it is bound to the ribosome.

In terms of biological role, one of the early assembly proteins it binds 23S rRNA. One of the proteins that surrounds the polypeptide exit tunnel on the outside of the ribosome. Forms the main docking site for trigger factor binding to the ribosome. The protein is Large ribosomal subunit protein uL23 of Thermosynechococcus vestitus (strain NIES-2133 / IAM M-273 / BP-1).